The chain runs to 247 residues: 5-oxoprolinase subunit A (247 aa).

The protein belongs to the LamB/PxpA family. In terms of assembly, forms a complex composed of PxpA, PxpB and PxpC.

It catalyses the reaction 5-oxo-L-proline + ATP + 2 H2O = L-glutamate + ADP + phosphate + H(+). Catalyzes the cleavage of 5-oxoproline to form L-glutamate coupled to the hydrolysis of ATP to ADP and inorganic phosphate. This is 5-oxoprolinase subunit A from Histophilus somni (strain 129Pt) (Haemophilus somnus).